The sequence spans 167 residues: GTP-dependent dephospho-CoA kinase (167 aa).

GTP contacts are provided by Asp-39, Val-41, Asp-58, Lys-60, and Glu-117.

It belongs to the GTP-dependent DPCK family.

It carries out the reaction 3'-dephospho-CoA + GTP = GDP + CoA + H(+). It participates in cofactor biosynthesis; coenzyme A biosynthesis. Catalyzes the GTP-dependent phosphorylation of the 3'-hydroxyl group of dephosphocoenzyme A to form coenzyme A (CoA). The sequence is that of GTP-dependent dephospho-CoA kinase from Korarchaeum cryptofilum (strain OPF8).